The sequence spans 411 residues: ATP phosphoribosyltransferase 1, chloroplastic (411 aa).

The segment covering 1-12 (MSLLLPTNLQQY) has biased composition (polar residues). The disordered stretch occupies residues 1 to 27 (MSLLLPTNLQQYPSSSSFPSSTPILSP). A chloroplast-targeting transit peptide spans 1 to 49 (MSLLLPTNLQQYPSSSSFPSSTPILSPPPSTAFSVIVPRRRCLRLVTSC). The span at 13–24 (PSSSSFPSSTPI) shows a compositional bias: low complexity. At V50 the chain carries N-acetylvaline.

The protein belongs to the ATP phosphoribosyltransferase family. Long subfamily. Mg(2+) serves as cofactor. As to expression, expressed in leaves and at lower levels in roots (at protein level).

Its subcellular location is the plastid. It is found in the chloroplast. It catalyses the reaction 1-(5-phospho-beta-D-ribosyl)-ATP + diphosphate = 5-phospho-alpha-D-ribose 1-diphosphate + ATP. It functions in the pathway amino-acid biosynthesis; L-histidine biosynthesis; L-histidine from 5-phospho-alpha-D-ribose 1-diphosphate: step 1/9. Its activity is regulated as follows. Feedback inhibited by L-histidine. Its function is as follows. Catalyzes the condensation of ATP and 5-phosphoribose 1-diphosphate to form N'-(5'-phosphoribosyl)-ATP (PR-ATP). The protein is ATP phosphoribosyltransferase 1, chloroplastic (HISN1A) of Arabidopsis thaliana (Mouse-ear cress).